The following is a 385-amino-acid chain: Lysine 6-dehydrogenase (385 aa).

This sequence belongs to the saccharopine dehydrogenase family. As to quaternary structure, homohexamer.

It catalyses the reaction L-lysine + NAD(+) = L-1-piperideine-6-carboxylate + NH4(+) + NADH + 2 H(+). In terms of biological role, catalyzes the oxidative deamination of L-lysine in the presence of NAD. Can also use (S)-(2-aminoethyl)-L-cysteine as a substrate, but more slowly. Can use both NAD and NADP but the preferred substrate is NAD. The polypeptide is Lysine 6-dehydrogenase (lysDH) (Geobacillus stearothermophilus (Bacillus stearothermophilus)).